The sequence spans 215 residues: Cytochrome b6 (215 aa).

Residues 32–52 form a helical membrane-spanning segment; that stretch reads IFYCFGGLVLTCFLIQVATGF. Cys35 provides a ligand contact to heme c. Heme b is bound by residues His86 and His100. 3 helical membrane-spanning segments follow: residues 90–110, 116–136, and 186–206; these read ASMM…TGGF, LTWV…VTGY, and AHTF…FLMI. 2 residues coordinate heme b: His187 and His202.

Belongs to the cytochrome b family. PetB subfamily. In terms of assembly, the 4 large subunits of the cytochrome b6-f complex are cytochrome b6, subunit IV (17 kDa polypeptide, PetD), cytochrome f and the Rieske protein, while the 4 small subunits are PetG, PetL, PetM and PetN. The complex functions as a dimer. Heme b serves as cofactor. The cofactor is heme c.

It localises to the plastid. The protein localises to the chloroplast thylakoid membrane. In terms of biological role, component of the cytochrome b6-f complex, which mediates electron transfer between photosystem II (PSII) and photosystem I (PSI), cyclic electron flow around PSI, and state transitions. The protein is Cytochrome b6 of Phaeodactylum tricornutum (strain CCAP 1055/1).